A 354-amino-acid polypeptide reads, in one-letter code: Protein Wnt-11 (354 aa).

The N-terminal stretch at 1–24 is a signal peptide; that stretch reads MKPSPQFFLAAFLSLILQTGICYG. 2 N-linked (GlcNAc...) asparagine glycosylation sites follow: asparagine 40 and asparagine 90. 11 disulfides stabilise this stretch: cysteine 80–cysteine 91, cysteine 130–cysteine 138, cysteine 140–cysteine 157, cysteine 209–cysteine 223, cysteine 211–cysteine 218, cysteine 283–cysteine 314, cysteine 299–cysteine 309, cysteine 313–cysteine 353, cysteine 329–cysteine 344, cysteine 331–cysteine 341, and cysteine 336–cysteine 337. Residue serine 215 is the site of O-palmitoleoyl serine; by PORCN attachment. N-linked (GlcNAc...) asparagine glycans are attached at residues asparagine 300 and asparagine 304.

This sequence belongs to the Wnt family. Palmitoleoylation is required for efficient binding to frizzled receptors. Depalmitoleoylation leads to Wnt signaling pathway inhibition. As to expression, expressed in the dermatome. The expression domain is mutually exclusive to the other Wnt genes.

It is found in the secreted. The protein localises to the extracellular space. Its subcellular location is the extracellular matrix. In terms of biological role, ligand for members of the frizzled family of seven transmembrane receptors. May play a role in the formation of dermal structure, both limb and feather buds. Is likely to signal over only few cell diameters. This is Protein Wnt-11 (WNT11) from Gallus gallus (Chicken).